A 409-amino-acid chain; its full sequence is Serine/threonine transporter SstT (409 aa).

The next 9 helical transmembrane spans lie at 17 to 37 (LVGQ…FFPA), 49 to 69 (FVSA…MASI), 83 to 103 (ILLL…IASF), 142 to 162 (ALIS…GIAF), 180 to 200 (VSLI…GLVA), 218 to 238 (LVVL…LIVF), 301 to 321 (GAAI…GIAV), 331 to 351 (VVAS…LLLI), and 357 to 377 (LFGI…IIAI).

This sequence belongs to the dicarboxylate/amino acid:cation symporter (DAACS) (TC 2.A.23) family.

The protein resides in the cell inner membrane. It carries out the reaction L-serine(in) + Na(+)(in) = L-serine(out) + Na(+)(out). The catalysed reaction is L-threonine(in) + Na(+)(in) = L-threonine(out) + Na(+)(out). Functionally, involved in the import of serine and threonine into the cell, with the concomitant import of sodium (symport system). This is Serine/threonine transporter SstT from Pseudomonas aeruginosa (strain LESB58).